The chain runs to 151 residues: Small ribosomal subunit protein uS15 (151 aa).

It belongs to the universal ribosomal protein uS15 family.

The sequence is that of Small ribosomal subunit protein uS15 (RpS13) from Choristoneura parallela (Spotted fireworm moth).